Here is a 274-residue protein sequence, read N- to C-terminus: GCN5-related N-acetyltransferase 7, chloroplastic (274 aa).

Residues 1–65 (MAFLCSSLPS…STFVISESVS (65 aa)) constitute a chloroplast transit peptide. An N-acetyltransferase domain is found at 75 to 267 (LRVRTFNELN…QRLLLWLALP (193 aa)). Residues 189 to 191 (VCV), 197 to 202 (RNGVGY), 228 to 230 (NEA), and Tyr-235 contribute to the acetyl-CoA site. Tyr-235 functions as the Proton donor in the catalytic mechanism.

This sequence belongs to the acetyltransferase family. GNAT subfamily. In terms of assembly, oligomer. Autoacetylated. Expressed in green tissues.

It is found in the plastid. Its subcellular location is the chloroplast. The enzyme catalyses an N-terminal L-alpha-aminoacyl-[protein] + acetyl-CoA = N-terminal N(alpha)-acetyl-L-alpha-aminoacyl-[protein] + CoA + H(+). The catalysed reaction is L-lysyl-[protein] + acetyl-CoA = N(6)-acetyl-L-lysyl-[protein] + CoA + H(+). It catalyses the reaction N-terminal L-alanyl-[protein] + acetyl-CoA = N-terminal N(alpha)-acetyl-L-alanyl-[protein] + CoA + H(+). It carries out the reaction N-terminal L-seryl-[protein] + acetyl-CoA = N-terminal N(alpha)-acetyl-L-seryl-[protein] + CoA + H(+). The enzyme catalyses N-terminal L-threonyl-[protein] + acetyl-CoA = N-terminal N(alpha)-acetyl-L-threonyl-[protein] + CoA + H(+). The catalysed reaction is N-terminal L-methionyl-[protein] + acetyl-CoA = N-terminal N(alpha)-acetyl-L-methionyl-[protein] + CoA + H(+). It catalyses the reaction N-terminal L-prolyl-[protein] + acetyl-CoA = N-terminal N(alpha)-acetyl-L-prolyl-[protein] + CoA + H(+). It carries out the reaction N-terminal L-valyl-[protein] + acetyl-CoA = N-terminal N(alpha)-acetyl-L-valyl-[protein] + CoA + H(+). Its function is as follows. Protein acetyltransferase with dual specificity triggering both N-alpha-acetylation (NTA), with a large spectrum of modified N-termini, including methionine, alanine, serine, threonine and to a lower extent valine and proline as substrates, and epsilon-lysine acetylation (KA). This Arabidopsis thaliana (Mouse-ear cress) protein is GCN5-related N-acetyltransferase 7, chloroplastic.